The following is a 194-amino-acid chain: Holliday junction branch migration complex subunit RuvA (194 aa).

Positions 1–63 (MFEYLKGTVA…EDELSLYGFM (63 aa)) are domain I. Residues 64-142 (SIEELDMFQK…KTNVVYDYTL (79 aa)) form a domain II region. The interval 143 to 151 (FNDDHKDDD) is flexible linker. The domain III stretch occupies residues 151-194 (DEAVQALMALGYSKLESEKAVEAVRDMSLGTEDVIKRALKWLMK).

Belongs to the RuvA family. As to quaternary structure, homotetramer. Forms an RuvA(8)-RuvB(12)-Holliday junction (HJ) complex. HJ DNA is sandwiched between 2 RuvA tetramers; dsDNA enters through RuvA and exits via RuvB. An RuvB hexamer assembles on each DNA strand where it exits the tetramer. Each RuvB hexamer is contacted by two RuvA subunits (via domain III) on 2 adjacent RuvB subunits; this complex drives branch migration. In the full resolvosome a probable DNA-RuvA(4)-RuvB(12)-RuvC(2) complex forms which resolves the HJ.

It is found in the cytoplasm. In terms of biological role, the RuvA-RuvB-RuvC complex processes Holliday junction (HJ) DNA during genetic recombination and DNA repair, while the RuvA-RuvB complex plays an important role in the rescue of blocked DNA replication forks via replication fork reversal (RFR). RuvA specifically binds to HJ cruciform DNA, conferring on it an open structure. The RuvB hexamer acts as an ATP-dependent pump, pulling dsDNA into and through the RuvAB complex. HJ branch migration allows RuvC to scan DNA until it finds its consensus sequence, where it cleaves and resolves the cruciform DNA. The sequence is that of Holliday junction branch migration complex subunit RuvA from Alkaliphilus oremlandii (strain OhILAs) (Clostridium oremlandii (strain OhILAs)).